We begin with the raw amino-acid sequence, 253 residues long: Sulfate transporter CysZ (253 aa).

Transmembrane regions (helical) follow at residues 31-51 (FVIL…WWLF), 75-95 (LLWP…FSTI), 151-171 (IVLL…PVLW), and 222-242 (IPLL…AMWV).

It belongs to the CysZ family.

The protein resides in the cell inner membrane. Functionally, high affinity, high specificity proton-dependent sulfate transporter, which mediates sulfate uptake. Provides the sulfur source for the cysteine synthesis pathway. The chain is Sulfate transporter CysZ from Escherichia coli O127:H6 (strain E2348/69 / EPEC).